The following is a 416-amino-acid chain: 4-hydroxy-3-methylbut-2-en-1-yl diphosphate synthase (flavodoxin) (416 aa).

4 residues coordinate [4Fe-4S] cluster: cysteine 304, cysteine 307, cysteine 350, and glutamate 357.

The protein belongs to the IspG family. [4Fe-4S] cluster serves as cofactor.

The enzyme catalyses (2E)-4-hydroxy-3-methylbut-2-enyl diphosphate + oxidized [flavodoxin] + H2O + 2 H(+) = 2-C-methyl-D-erythritol 2,4-cyclic diphosphate + reduced [flavodoxin]. It participates in isoprenoid biosynthesis; isopentenyl diphosphate biosynthesis via DXP pathway; isopentenyl diphosphate from 1-deoxy-D-xylulose 5-phosphate: step 5/6. Converts 2C-methyl-D-erythritol 2,4-cyclodiphosphate (ME-2,4cPP) into 1-hydroxy-2-methyl-2-(E)-butenyl 4-diphosphate. This is 4-hydroxy-3-methylbut-2-en-1-yl diphosphate synthase (flavodoxin) from Agrobacterium fabrum (strain C58 / ATCC 33970) (Agrobacterium tumefaciens (strain C58)).